The sequence spans 428 residues: Glutamate-1-semialdehyde 2,1-aminomutase (428 aa).

Residue Lys-267 is modified to N6-(pyridoxal phosphate)lysine.

This sequence belongs to the class-III pyridoxal-phosphate-dependent aminotransferase family. HemL subfamily. Homodimer. The cofactor is pyridoxal 5'-phosphate.

Its subcellular location is the cytoplasm. It carries out the reaction (S)-4-amino-5-oxopentanoate = 5-aminolevulinate. Its pathway is porphyrin-containing compound metabolism; protoporphyrin-IX biosynthesis; 5-aminolevulinate from L-glutamyl-tRNA(Glu): step 2/2. It functions in the pathway porphyrin-containing compound metabolism; chlorophyll biosynthesis. The protein is Glutamate-1-semialdehyde 2,1-aminomutase of Prochlorococcus marinus (strain NATL1A).